A 331-amino-acid polypeptide reads, in one-letter code: Rho GTPase-activating protein 5 (331 aa).

Positions 3–16 (IGGPTNIRHVAHVT) constitute a CRIB domain. Residues 48–225 (VSTESMQLSY…LLKSLTEKTV (178 aa)) enclose the Rho-GAP domain. Over residues 227–251 (EREASSSVVDRRCSKEAEDGEKEKD) the composition is skewed to basic and acidic residues. The interval 227–331 (EREASSSVVD…VQPPICSSNP (105 aa)) is disordered. The segment covering 252-277 (NEEEEEDEEEEEEEEDEDEDEEEEGD) has biased composition (acidic residues).

As to expression, expressed in differentiating xylem cells.

The protein resides in the cell membrane. Functionally, acts as a GTPase activator for the Rac-type GTPase by converting it to an inactive GDP-bound state. The polypeptide is Rho GTPase-activating protein 5 (ROPGAP5) (Arabidopsis thaliana (Mouse-ear cress)).